The primary structure comprises 185 residues: HTH-type transcriptional regulator SAR2658 (185 aa).

The 61-residue stretch at 6–66 (KENRQRIEEI…YVIQRDLDIF (61 aa)) folds into the HTH tetR-type domain. The H-T-H motif DNA-binding region spans 29–48 (SMNRIAKELGIGMGTLYRHF).

The chain is HTH-type transcriptional regulator SAR2658 from Staphylococcus aureus (strain MRSA252).